The primary structure comprises 122 residues: Flagellar protein FliT (122 aa).

Residues 1–50 (MERQQQLLAAYQQIHSLSSQMIALAQTERWEDLVELELAYVTAVESTAAF) form a required for homodimerization region. Residues 60 to 98 (LQELLRNKLQQILDNETELKRLLQQRMDQLKELIGQSTR) form a fliD binding region.

This sequence belongs to the FliT family. Homodimer. Interacts with FliD and FlhC.

The protein localises to the cytoplasm. It localises to the cytosol. Its function is as follows. Dual-function protein that regulates the transcription of class 2 flagellar operons and that also acts as an export chaperone for the filament-capping protein FliD. As a transcriptional regulator, acts as an anti-FlhDC factor; it directly binds FlhC, thus inhibiting the binding of the FlhC/FlhD complex to class 2 promoters, resulting in decreased expression of class 2 flagellar operons. As a chaperone, effects FliD transition to the membrane by preventing its premature polymerization, and by directing it to the export apparatus. The chain is Flagellar protein FliT from Serratia proteamaculans (strain 568).